Consider the following 407-residue polypeptide: Na(+)-translocating NADH-quinone reductase subunit F (407 aa).

The chain crosses the membrane as a helical span at residues 3-23 (IILGVAMFTGIVMVLVLLILF). The region spanning 32-126 (GDIAVEVNGD…NLKIELPEEI (95 aa)) is the 2Fe-2S ferredoxin-type domain. [2Fe-2S] cluster contacts are provided by Cys-69, Cys-75, Cys-78, and Cys-110. Residues 129–269 (VKKWECEVIS…SGPFGEFFAK (141 aa)) form the FAD-binding FR-type domain.

It belongs to the NqrF family. Composed of six subunits; NqrA, NqrB, NqrC, NqrD, NqrE and NqrF. Requires [2Fe-2S] cluster as cofactor. The cofactor is FAD.

It is found in the cell inner membrane. The catalysed reaction is a ubiquinone + n Na(+)(in) + NADH + H(+) = a ubiquinol + n Na(+)(out) + NAD(+). NQR complex catalyzes the reduction of ubiquinone-1 to ubiquinol by two successive reactions, coupled with the transport of Na(+) ions from the cytoplasm to the periplasm. The first step is catalyzed by NqrF, which accepts electrons from NADH and reduces ubiquinone-1 to ubisemiquinone by a one-electron transfer pathway. This Serratia proteamaculans (strain 568) protein is Na(+)-translocating NADH-quinone reductase subunit F.